The chain runs to 171 residues: Co-chaperone protein HscB (171 aa).

One can recognise a J domain in the interval 2–74; it reads DYFTLFGLPA…LTRAEYLLSL (73 aa).

This sequence belongs to the HscB family. Interacts with HscA and stimulates its ATPase activity. Interacts with IscU.

Functionally, co-chaperone involved in the maturation of iron-sulfur cluster-containing proteins. Seems to help targeting proteins to be folded toward HscA. The sequence is that of Co-chaperone protein HscB from Klebsiella pneumoniae subsp. pneumoniae (strain ATCC 700721 / MGH 78578).